Reading from the N-terminus, the 85-residue chain is Small ribosomal subunit protein bS18 (85 aa).

Belongs to the bacterial ribosomal protein bS18 family. In terms of assembly, part of the 30S ribosomal subunit. Forms a tight heterodimer with protein bS6.

Functionally, binds as a heterodimer with protein bS6 to the central domain of the 16S rRNA, where it helps stabilize the platform of the 30S subunit. The protein is Small ribosomal subunit protein bS18 of Hyphomonas neptunium (strain ATCC 15444).